Reading from the N-terminus, the 444-residue chain is MSRKYFGTDGIRGEVGTSPITPDFVLRLGHAVGRVLRGTHDRPVVLIGKDTRISGYMLESALEAGLNSAGVDVMLTGPLPTPAVAYLTRALRLSLGVVISASHNHFMDNGIKFFSARGEKLSDAWEMEVEAAIEAPPQWSDSSQIGRARRLHDAPGRYVEFCKSTFSNELSLKGLKIVVDAANGAAYHVAPDVFHELGADVVRIGCEPDGLNINDGVGATSPQALVEAVRMNGADYGVALDGDADRVLLVDRNGRLYNGDELLYVMVADRLAQGEPVPGAVGTLMTNMAVEVALQQRGVEFVRAKVGDRYVLEELVSRGWQLGGEGSGHLLALDKHTTGDGIVSALQVLQAQQRNGRSIAELLDGVELFPQTLINVRLAAGQDWKLNDRLARERIAIGNELGQSGRVLIRPSGTEPLLRVMVEARDAAQARLCADRLAVAAQEG.

The active-site Phosphoserine intermediate is the Ser102. Residues Ser102, Asp241, Asp243, and Asp245 each contribute to the Mg(2+) site. Phosphoserine is present on Ser102.

Belongs to the phosphohexose mutase family. Mg(2+) serves as cofactor. Activated by phosphorylation.

It catalyses the reaction alpha-D-glucosamine 1-phosphate = D-glucosamine 6-phosphate. Its function is as follows. Catalyzes the conversion of glucosamine-6-phosphate to glucosamine-1-phosphate. The chain is Phosphoglucosamine mutase from Leptothrix cholodnii (strain ATCC 51168 / LMG 8142 / SP-6) (Leptothrix discophora (strain SP-6)).